The following is a 219-amino-acid chain: Ribose-5-phosphate isomerase A (219 aa).

Residues 28–31 (SGST), 81–84 (DGAD), and 94–97 (KGGG) each bind substrate. The active-site Proton acceptor is Glu103. Lys121 contributes to the substrate binding site.

This sequence belongs to the ribose 5-phosphate isomerase family. Homodimer.

The catalysed reaction is aldehydo-D-ribose 5-phosphate = D-ribulose 5-phosphate. The protein operates within carbohydrate degradation; pentose phosphate pathway; D-ribose 5-phosphate from D-ribulose 5-phosphate (non-oxidative stage): step 1/1. Its function is as follows. Catalyzes the reversible conversion of ribose-5-phosphate to ribulose 5-phosphate. The sequence is that of Ribose-5-phosphate isomerase A from Haemophilus ducreyi (strain 35000HP / ATCC 700724).